A 272-amino-acid chain; its full sequence is Shikimate dehydrogenase (NADP(+)) (272 aa).

Shikimate contacts are provided by residues 14 to 16 and T61; that span reads SKS. K65 acts as the Proton acceptor in catalysis. 2 residues coordinate shikimate: N86 and D102. Residues 126–130, 150–155, and M214 contribute to the NADP(+) site; these read GAGGA and NRTASK. Y216 lines the shikimate pocket. G239 serves as a coordination point for NADP(+).

It belongs to the shikimate dehydrogenase family. Homodimer.

It carries out the reaction shikimate + NADP(+) = 3-dehydroshikimate + NADPH + H(+). It participates in metabolic intermediate biosynthesis; chorismate biosynthesis; chorismate from D-erythrose 4-phosphate and phosphoenolpyruvate: step 4/7. Involved in the biosynthesis of the chorismate, which leads to the biosynthesis of aromatic amino acids. Catalyzes the reversible NADPH linked reduction of 3-dehydroshikimate (DHSA) to yield shikimate (SA). This Pseudoalteromonas atlantica (strain T6c / ATCC BAA-1087) protein is Shikimate dehydrogenase (NADP(+)).